We begin with the raw amino-acid sequence, 373 residues long: Probable quinol oxidase subunit 2 (373 aa).

Positions 1–19 (MSKFKSLLLLFGSLILLSG) are cleaved as a signal peptide. A lipid anchor (N-palmitoyl cysteine) is attached at Cys-20. Cys-20 carries the S-diacylglycerol cysteine lipid modification. Helical transmembrane passes span 38-58 (FLIMYSIIFMLVIIAAVLILF) and 82-102 (LETIWFIIPVIIVIALAIPTV). 2 stretches are compositionally biased toward basic and acidic residues: residues 292 to 320 (EERTADVLDKPDQPARKPEITNANYERHG) and 339 to 373 (EESHNMDEMEKISEGAKDEKASKIEKKDHENGGGH). Residues 292–373 (EERTADVLDK…KKDHENGGGH (82 aa)) are disordered.

It belongs to the cytochrome c oxidase subunit 2 family.

Its subcellular location is the cell membrane. It carries out the reaction 2 a quinol + O2 = 2 a quinone + 2 H2O. Catalyzes quinol oxidation with the concomitant reduction of oxygen to water. Subunit II transfers the electrons from a quinol to the binuclear center of the catalytic subunit I. This chain is Probable quinol oxidase subunit 2 (qoxA), found in Staphylococcus saprophyticus subsp. saprophyticus (strain ATCC 15305 / DSM 20229 / NCIMB 8711 / NCTC 7292 / S-41).